The primary structure comprises 189 residues: Putative manganese efflux pump MntP (189 aa).

The next 6 helical transmembrane spans lie at 3-23, 41-61, 65-85, 103-123, 132-152, and 167-187; these read LSAT…ASIG, LIFG…GLFA, IMEW…MRMI, GFWL…AIGV, IVHT…LGMM, and ILGG…HLGY.

This sequence belongs to the MntP (TC 9.B.29) family.

It localises to the cell inner membrane. Functionally, probably functions as a manganese efflux pump. This is Putative manganese efflux pump MntP from Serratia proteamaculans (strain 568).